We begin with the raw amino-acid sequence, 381 residues long: Choline transport ATP-binding protein OpuBA (381 aa).

The ABC transporter domain occupies 2-236; it reads LTLENVSKTY…PADEFVEEFI (235 aa). 35–42 serves as a coordination point for ATP; the sequence is GPSGCGKT. 2 consecutive CBS domains span residues 256-314 and 316-374; these read MNTQ…LVSE and LHED…WGEE.

This sequence belongs to the ABC transporter superfamily.

Functionally, involved in a high affinity multicomponent binding-protein-dependent transport system for choline. Probably responsible for energy coupling to the transport system. In Bacillus subtilis (strain 168), this protein is Choline transport ATP-binding protein OpuBA (opuBA).